The following is a 116-amino-acid chain: Large ribosomal subunit protein uL18 (116 aa).

It belongs to the universal ribosomal protein uL18 family. As to quaternary structure, part of the 50S ribosomal subunit; part of the 5S rRNA/L5/L18/L25 subcomplex. Contacts the 5S and 23S rRNAs.

This is one of the proteins that bind and probably mediate the attachment of the 5S RNA into the large ribosomal subunit, where it forms part of the central protuberance. The polypeptide is Large ribosomal subunit protein uL18 (Shewanella putrefaciens (strain CN-32 / ATCC BAA-453)).